The sequence spans 314 residues: Protein REGULATOR OF FATTY ACID COMPOSITION 3, chloroplastic (314 aa).

Residues 1-47 (MESLLHASSSLVSLRPRIDGRDSFINPSRVCLNPSLGRRGSKPLPLV) constitute a chloroplast transit peptide. Disordered stretches follow at residues 49–73 (AAKK…ATGP) and 214–314 (AITE…NVGG). The segment covering 56–69 (KKDDNHNFSARPDE) has biased composition (basic and acidic residues). 2 stretches are compositionally biased toward acidic residues: residues 233–269 (EYYD…DDDG) and 277–294 (GDEE…EQEE). Positions 295-308 (GQDKSTNGRRETRR) are enriched in basic and acidic residues.

The protein belongs to the bacterial ribosomal protein bS6 family. In terms of assembly, interacts with CFM3B/SPRT2 in plastids. In terms of tissue distribution, expressed ubiquitously in roots, leaves, stems, flower buds, flowers and siliques.

Its subcellular location is the plastid. It localises to the chloroplast. Prevents non-specific action of the splicing factor CFM3b during plastid rRNA biogenesis to improve the accuracy of plastid rRNA processing. Required for plastid functions such as photosynthesis, intracellular distribution, plastid rRNAs biosynthesis and plastid gene expression in roots. Involved in a sucrose-conditional process important for the organization of root lateral and apical meristems (e.g. establishment of RAM from pericycle and symplasmic connectivity), and subsequent primary and lateral roots development. Modulates C18 unsaturated fatty acid metabolism. This chain is Protein REGULATOR OF FATTY ACID COMPOSITION 3, chloroplastic, found in Arabidopsis thaliana (Mouse-ear cress).